Reading from the N-terminus, the 232-residue chain is Small ribosomal subunit protein uS3 (232 aa).

A KH type-2 domain is found at 39 to 107 (IRKFLKTKLY…DIAINIKEER (69 aa)). A compositionally biased stretch (basic and acidic residues) spans 213 to 222 (QADKNEDTSP). Residues 213–232 (QADKNEDTSPKKPRRARRGK) form a disordered region. Residues 223 to 232 (KKPRRARRGK) are compositionally biased toward basic residues.

The protein belongs to the universal ribosomal protein uS3 family. In terms of assembly, part of the 30S ribosomal subunit. Forms a tight complex with proteins S10 and S14.

Binds the lower part of the 30S subunit head. Binds mRNA in the 70S ribosome, positioning it for translation. The sequence is that of Small ribosomal subunit protein uS3 from Campylobacter fetus subsp. fetus (strain 82-40).